The sequence spans 457 residues: Ribosomal protein uS12 methylthiotransferase RimO (457 aa).

The MTTase N-terminal domain maps to 6–116 (PKVGFVSLGC…VMEAVHAALP (111 aa)). Residues cysteine 15, cysteine 51, cysteine 80, cysteine 147, cysteine 151, and cysteine 154 each coordinate [4Fe-4S] cluster. The 239-residue stretch at 133-371 (LTPRHYAYLK…AKQAQISALR (239 aa)) folds into the Radical SAM core domain. Residues 373-441 (ESKIGSVQQC…EHDLFGDALP (69 aa)) form the TRAM domain.

The protein belongs to the methylthiotransferase family. RimO subfamily. It depends on [4Fe-4S] cluster as a cofactor.

The protein localises to the cytoplasm. It carries out the reaction L-aspartate(89)-[ribosomal protein uS12]-hydrogen + (sulfur carrier)-SH + AH2 + 2 S-adenosyl-L-methionine = 3-methylsulfanyl-L-aspartate(89)-[ribosomal protein uS12]-hydrogen + (sulfur carrier)-H + 5'-deoxyadenosine + L-methionine + A + S-adenosyl-L-homocysteine + 2 H(+). Catalyzes the methylthiolation of an aspartic acid residue of ribosomal protein uS12. This is Ribosomal protein uS12 methylthiotransferase RimO from Xanthomonas axonopodis pv. citri (strain 306).